A 445-amino-acid polypeptide reads, in one-letter code: Squalene synthase (445 aa).

2 consecutive transmembrane segments (helical) span residues 291 to 311 and 405 to 425; these read STFTFCAIPQVMAIATLDLVY and LIVCLAVIFSMSGLMAYIAYV.

This sequence belongs to the phytoene/squalene synthase family. The cofactor is Mg(2+).

It is found in the endoplasmic reticulum membrane. It carries out the reaction 2 (2E,6E)-farnesyl diphosphate + NADPH + H(+) = squalene + 2 diphosphate + NADP(+). The enzyme catalyses 2 (2E,6E)-farnesyl diphosphate + NADH + H(+) = squalene + 2 diphosphate + NAD(+). Its pathway is terpene metabolism; lanosterol biosynthesis; lanosterol from farnesyl diphosphate: step 1/3. Its function is as follows. Catalyzes the condensation of 2 two farnesyl pyrophosphate moieties to form squalene. It is the first committed enzyme of the sterol biosynthesis pathway. Required for the biosynthesis of ergosterol. This Yarrowia lipolytica (strain CLIB 122 / E 150) (Yeast) protein is Squalene synthase (SQS1).